We begin with the raw amino-acid sequence, 649 residues long: DNA topoisomerase 3 (649 aa).

Residues 1-134 (MRLFIAEKPS…KRQQVRRCLI (134 aa)) enclose the Toprim domain. Mg(2+)-binding residues include Glu-7, Asp-103, and Asp-105. The 449-residue stretch at 155-603 (FVPLCVSALA…PLVGTLYQLI (449 aa)) folds into the Topo IA-type catalytic domain. Positions 194–199 (SVGRVQ) are interaction with DNA. Tyr-328 (O-(5'-phospho-DNA)-tyrosine intermediate) is an active-site residue. Positions 614–649 (FRGIVAPGGGDKKKSAPRKRAGKKSPPAAETGRQTE) are disordered.

This sequence belongs to the type IA topoisomerase family. It depends on Mg(2+) as a cofactor.

The enzyme catalyses ATP-independent breakage of single-stranded DNA, followed by passage and rejoining.. Releases the supercoiling and torsional tension of DNA, which is introduced during the DNA replication and transcription, by transiently cleaving and rejoining one strand of the DNA duplex. Introduces a single-strand break via transesterification at a target site in duplex DNA. The scissile phosphodiester is attacked by the catalytic tyrosine of the enzyme, resulting in the formation of a DNA-(5'-phosphotyrosyl)-enzyme intermediate and the expulsion of a 3'-OH DNA strand. The free DNA strand then undergoes passage around the unbroken strand, thus removing DNA supercoils. Finally, in the religation step, the DNA 3'-OH attacks the covalent intermediate to expel the active-site tyrosine and restore the DNA phosphodiester backbone. The chain is DNA topoisomerase 3 from Salmonella typhimurium (strain LT2 / SGSC1412 / ATCC 700720).